Here is a 450-residue protein sequence, read N- to C-terminus: UDP-N-acetylmuramoylalanine--D-glutamate ligase (450 aa).

119–125 (GSNGKTT) lines the ATP pocket.

The protein belongs to the MurCDEF family.

The protein localises to the cytoplasm. The catalysed reaction is UDP-N-acetyl-alpha-D-muramoyl-L-alanine + D-glutamate + ATP = UDP-N-acetyl-alpha-D-muramoyl-L-alanyl-D-glutamate + ADP + phosphate + H(+). The protein operates within cell wall biogenesis; peptidoglycan biosynthesis. Its function is as follows. Cell wall formation. Catalyzes the addition of glutamate to the nucleotide precursor UDP-N-acetylmuramoyl-L-alanine (UMA). This is UDP-N-acetylmuramoylalanine--D-glutamate ligase from Bacillus cereus (strain B4264).